The chain runs to 87 residues: Small ribosomal subunit protein uS15 (87 aa).

The protein belongs to the universal ribosomal protein uS15 family. As to quaternary structure, part of the 30S ribosomal subunit. Forms a bridge to the 50S subunit in the 70S ribosome, contacting the 23S rRNA.

One of the primary rRNA binding proteins, it binds directly to 16S rRNA where it helps nucleate assembly of the platform of the 30S subunit by binding and bridging several RNA helices of the 16S rRNA. Its function is as follows. Forms an intersubunit bridge (bridge B4) with the 23S rRNA of the 50S subunit in the ribosome. The protein is Small ribosomal subunit protein uS15 of Dehalococcoides mccartyi (strain ATCC BAA-2100 / JCM 16839 / KCTC 5957 / BAV1).